An 822-amino-acid chain; its full sequence is Myosin-D (822 aa).

Residues 95 to 770 enclose the Myosin motor domain; it reads LTYGDIGGLP…AAKMLVRLQR (676 aa). 189–196 serves as a coordination point for ATP; the sequence is GESGAGKT. The tract at residues 660 to 670 is actin-binding; that stretch reads SHFIRCIKPND. Residues 772–822 are tail; sequence ALSAWEPLVGVFEGMTVLKRAKQLSTGRAVPATRICANVRRKLVQAGIKVC.

It belongs to the TRAFAC class myosin-kinesin ATPase superfamily. Myosin family.

It is found in the cell membrane. It localises to the cytoplasm. Functionally, myosins are actin-based motor molecules with ATPase activity. Unconventional myosins serve in intracellular movements. Their highly divergent tails are presumed to bind to membranous compartments, which would be moved relative to actin filaments. The polypeptide is Myosin-D (Toxoplasma gondii).